A 449-amino-acid chain; its full sequence is N-succinylarginine dihydrolase (449 aa).

Substrate-binding positions include 19–28 (GGLSYGNVAS), N110, and 137–138 (HR). The segment at 23-43 (YGNVASQSNSQQGSNPREAAR) is disordered. Residues 25-37 (NVASQSNSQQGSN) are compositionally biased toward polar residues. E174 is an active-site residue. R214 contacts substrate. Residue H250 is part of the active site. The substrate site is built by D252 and N365. C371 serves as the catalytic Nucleophile.

It belongs to the succinylarginine dihydrolase family. As to quaternary structure, homodimer.

The enzyme catalyses N(2)-succinyl-L-arginine + 2 H2O + 2 H(+) = N(2)-succinyl-L-ornithine + 2 NH4(+) + CO2. Its pathway is amino-acid degradation; L-arginine degradation via AST pathway; L-glutamate and succinate from L-arginine: step 2/5. Its function is as follows. Catalyzes the hydrolysis of N(2)-succinylarginine into N(2)-succinylornithine, ammonia and CO(2). This Pseudomonas putida (strain GB-1) protein is N-succinylarginine dihydrolase.